The chain runs to 636 residues: PTS system beta-glucoside-specific EIIBCA component (636 aa).

Residues 1 to 86 (MKYEQLAKDI…VEIGGFQNQA (86 aa)) enclose the PTS EIIB type-1 domain. Residue cysteine 26 is the Phosphocysteine intermediate; for EIIB activity of the active site. A run of 10 helical transmembrane segments spans residues 104–124 (IDII…TGMI), 146–166 (LLHA…GYTA), 172–192 (ATPF…LVVL), 215–235 (FLGI…IILA), 258–278 (LVPF…IGPI), 299–319 (IIAG…GLHW), 337–357 (VLAM…AVWL), 369–389 (VPAF…GVTL), 407–427 (AIIG…IFGI), and 444–464 (IVIA…LFGL). Residues 105–476 (DIIASIFTPV…GNASDEQTET (372 aa)) enclose the PTS EIIC type-1 domain. The disordered stretch occupies residues 472–492 (EQTETKAHTSTGTGEKEEISS). The PTS EIIA type-1 domain maps to 506 to 610 (DEAFSSGALG…AVTTPVIVTN (105 aa)). Catalysis depends on histidine 558, which acts as the Tele-phosphohistidine intermediate; for EIIA activity.

Its subcellular location is the cell membrane. The phosphoenolpyruvate-dependent sugar phosphotransferase system (sugar PTS), a major carbohydrate active -transport system, catalyzes the phosphorylation of incoming sugar substrates concomitantly with their translocation across the cell membrane. This system is involved in beta-glucoside transport. This Halalkalibacterium halodurans (strain ATCC BAA-125 / DSM 18197 / FERM 7344 / JCM 9153 / C-125) (Bacillus halodurans) protein is PTS system beta-glucoside-specific EIIBCA component (bglP).